The primary structure comprises 161 residues: Regulator of ribonuclease activity A (161 aa).

Belongs to the RraA family. As to quaternary structure, homotrimer. Binds to both RNA-binding sites in the C-terminal region of Rne and to RhlB.

It is found in the cytoplasm. Its function is as follows. Globally modulates RNA abundance by binding to RNase E (Rne) and regulating its endonucleolytic activity. Can modulate Rne action in a substrate-dependent manner by altering the composition of the degradosome. Modulates RNA-binding and helicase activities of the degradosome. In Sodalis glossinidius (strain morsitans), this protein is Regulator of ribonuclease activity A.